Consider the following 248-residue polypeptide: Probable septum site-determining protein MinC (248 aa).

Residues 94–125 (GMPPAMRGGQPAADFEAPAGEPQANPGAPEPQ) are disordered.

This sequence belongs to the MinC family. In terms of assembly, interacts with MinD and FtsZ.

Cell division inhibitor that blocks the formation of polar Z ring septums. Rapidly oscillates between the poles of the cell to destabilize FtsZ filaments that have formed before they mature into polar Z rings. Prevents FtsZ polymerization. The protein is Probable septum site-determining protein MinC of Brucella abortus (strain S19).